We begin with the raw amino-acid sequence, 405 residues long: Putative aminotransferase AatC (405 aa).

Lysine 238 is subject to N6-(pyridoxal phosphate)lysine.

This sequence belongs to the class-I pyridoxal-phosphate-dependent aminotransferase family. As to quaternary structure, homodimer. It depends on pyridoxal 5'-phosphate as a cofactor.

It localises to the cytoplasm. This Rhizobium meliloti (strain 1021) (Ensifer meliloti) protein is Putative aminotransferase AatC (aatC).